Reading from the N-terminus, the 196-residue chain is Peptide deformylase (196 aa).

Fe cation-binding residues include Cys-105 and His-147. Residue Glu-148 is part of the active site. His-151 is a Fe cation binding site.

The protein belongs to the polypeptide deformylase family. Fe(2+) is required as a cofactor.

It carries out the reaction N-terminal N-formyl-L-methionyl-[peptide] + H2O = N-terminal L-methionyl-[peptide] + formate. Removes the formyl group from the N-terminal Met of newly synthesized proteins. Requires at least a dipeptide for an efficient rate of reaction. N-terminal L-methionine is a prerequisite for activity but the enzyme has broad specificity at other positions. The chain is Peptide deformylase from Flavobacterium johnsoniae (strain ATCC 17061 / DSM 2064 / JCM 8514 / BCRC 14874 / CCUG 350202 / NBRC 14942 / NCIMB 11054 / UW101) (Cytophaga johnsonae).